The following is a 193-amino-acid chain: dCTP deaminase (193 aa).

DCTP is bound by residues 110 to 115 (RSSLAR), Asp128, 136 to 138 (VLE), Tyr171, Lys178, and Gln182. Glu138 functions as the Proton donor/acceptor in the catalytic mechanism.

This sequence belongs to the dCTP deaminase family. As to quaternary structure, homotrimer.

It catalyses the reaction dCTP + H2O + H(+) = dUTP + NH4(+). It functions in the pathway pyrimidine metabolism; dUMP biosynthesis; dUMP from dCTP (dUTP route): step 1/2. In terms of biological role, catalyzes the deamination of dCTP to dUTP. The protein is dCTP deaminase of Buchnera aphidicola subsp. Schizaphis graminum (strain Sg).